A 205-amino-acid chain; its full sequence is MDDDVLTTLKILIIGESGVGKSSLLLRFTDDTFDPELAATIGVDFKVKTIAIDGNRAKLAIWDTAGQERFRTLTPSYYRGAQGVILVYDVTKRDTFTKLENWLNELETYCTRNDLVKMLVGNKIDKDNREVDRNEGLKFARKHSMLFIEASAKTRDGVQCAFEELVEKILQTPGLWESSIQNHGVQLSDNEPQRQGACGGYCSLV.

Residues S17, G20, K21, S22, S23, D34, P35, T40, G66, K123, D125, and A152 each contribute to the GTP site. Mg(2+) is bound at residue S22. 2 consecutive short sequence motifs (switch) follow at residues 31-45 and 63-80; these read DTFD…GVDF and DTAG…YYRG. Mg(2+) is bound at residue T40. C198 is lipidated: S-palmitoyl cysteine. C202 carries the cysteine methyl ester modification. Residue C202 is the site of S-geranylgeranyl cysteine attachment. A propeptide spans 203-205 (removed in mature form); sequence SLV.

Belongs to the small GTPase superfamily. Rab family. The cofactor is Mg(2+).

It is found in the endoplasmic reticulum membrane. The protein localises to the golgi apparatus. It localises to the cis-Golgi network membrane. Its subcellular location is the lipid droplet. The protein resides in the apical cell membrane. It carries out the reaction GTP + H2O = GDP + phosphate + H(+). With respect to regulation, regulated by guanine nucleotide exchange factors (GEFs) which promote the exchange of bound GDP for free GTP. Regulated by GTPase activating proteins (GAPs) which increase the GTP hydrolysis activity at the ER membrane. Inhibited by GDP dissociation inhibitors (GDIs) which prevent Rab-GDP dissociation. The small GTPases Rab are key regulators of intracellular membrane trafficking, from the formation of transport vesicles to their fusion with membranes. Rabs cycle between an inactive GDP-bound form and an active GTP-bound form that is able to recruit to membranes different sets of downstream effectors directly responsible for vesicle formation, movement, tethering and fusion. Required for the localization of ZFYVE1 to lipid droplets and for its function in mediating the formation of endoplasmic reticulum-lipid droplets (ER-LD) contacts. Also required for maintaining endoplasmic reticulum structure. Plays a role in apical endocytosis/recycling. Plays a key role in eye and brain development and neurodegeneration. The sequence is that of Ras-related protein Rab-18-B (rab18b) from Danio rerio (Zebrafish).